The sequence spans 469 residues: Argininosuccinate lyase (469 aa).

This sequence belongs to the lyase 1 family. Argininosuccinate lyase subfamily.

The protein localises to the cytoplasm. It catalyses the reaction 2-(N(omega)-L-arginino)succinate = fumarate + L-arginine. It participates in amino-acid biosynthesis; L-arginine biosynthesis; L-arginine from L-ornithine and carbamoyl phosphate: step 3/3. This Novosphingobium aromaticivorans (strain ATCC 700278 / DSM 12444 / CCUG 56034 / CIP 105152 / NBRC 16084 / F199) protein is Argininosuccinate lyase.